Consider the following 128-residue polypeptide: MLGVLLVLHGSKIPEWKDVGIKYAEYLSRYFNLVEFGFLEFNKPTLSEALSNLLAKGANKIVVVPLLFATGTHFKRDIPRLLGIDGDEKKIQYMGKEIEIIIADPLGFDEKIGEVLVKRVNETYNKNY.

H9 serves as the catalytic Proton acceptor. H9 contributes to the Co(2+) binding site. Residues K43 and 68 to 73 each bind substrate; that span reads FATGTH. H73 is a binding site for Co(2+).

It belongs to the CbiX family. CbiXS subfamily. In terms of assembly, homotetramer; dimer of dimers.

The enzyme catalyses Co-sirohydrochlorin + 2 H(+) = sirohydrochlorin + Co(2+). Its pathway is cofactor biosynthesis; adenosylcobalamin biosynthesis; cob(II)yrinate a,c-diamide from sirohydrochlorin (anaerobic route): step 1/10. Catalyzes the insertion of Co(2+) into sirohydrochlorin as part of the anaerobic pathway to cobalamin biosynthesis. This is Sirohydrochlorin cobaltochelatase from Saccharolobus islandicus (strain Y.N.15.51 / Yellowstone #2) (Sulfolobus islandicus).